Reading from the N-terminus, the 342-residue chain is Peroxisomal membrane protein import receptor PEX19 (342 aa).

The segment covering 1 to 18 (MNENEYDNFDDLDDLLDE) has biased composition (acidic residues). Disordered stretches follow at residues 1 to 68 (MNEN…DPEL) and 119 to 141 (CSSL…GFKN). Basic and acidic residues predominate over residues 41 to 54 (SENKEKNAESKDSD). Serine 62 is modified (phosphoserine). A Phosphoserine modification is found at serine 304. The tract at residues 321 to 342 (IDGNDPNLGNLDKELTDGCKQQ) is disordered. The span at 331–342 (LDKELTDGCKQQ) shows a compositional bias: basic and acidic residues. Cysteine methyl ester is present on cysteine 339. Cysteine 339 is lipidated: S-farnesyl cysteine. Positions 340–342 (KQQ) are cleaved as a propeptide — removed in mature form.

The protein belongs to the peroxin-19 family. As to quaternary structure, interacts (farnesylated) with PEX3; farnesylation is required for this interaction. Interacts with PEX2, PEX5, PEX10, PEX11, PEX12, PEX13, PEX14, PEX17, PEX22, PEX25, PEX30 and PEX32; the interaction requires well-defined PEX19-binding sites within the peroxisomal membrane protein targeting signal (mPTS) of the PMPs and is independent on the presence of PEX3. Interacts with VPS1.

The protein resides in the cytoplasm. The protein localises to the peroxisome membrane. It localises to the endoplasmic reticulum membrane. In terms of biological role, required for proper post-translational import and stabilization of peroxisomal membrane proteins (PMPs). Acts as a cytosolic import receptor for PMPs and delivers them to the docking factor PEX3 at the peroxisomal membrane for subsequent insertion into the membrane. Acts as a chaperone in stabilizing or maintaining PMPs in the lipid bilayer. Directs PEX17, a peripheral component of the peroxisomal matrix protein translocation machinery, to peroxisomes. Stabilizes VPS1, a protein required for peroxisomal fission, at the peroxisomal membrane. Also acts in conjunction with PEX3 in the formation of peroxisomes from preperoxisomal compartments at the endoplasmic reticulum during de novo peroxisome synthesis, probably via the import of additional PMPs. This Saccharomyces cerevisiae (strain ATCC 204508 / S288c) (Baker's yeast) protein is Peroxisomal membrane protein import receptor PEX19 (PEX19).